A 115-amino-acid polypeptide reads, in one-letter code: Glutaredoxin-like protein C5orf63 homolog (115 aa).

A disulfide bond links Cys-40 and Cys-43.

It belongs to the glutaredoxin family. YDR286C subfamily.

This is Glutaredoxin-like protein C5orf63 homolog from Mus musculus (Mouse).